Consider the following 541-residue polypeptide: Chaperonin GroEL (541 aa).

ATP-binding positions include threonine 29 to proline 32, aspartate 86 to threonine 90, glycine 413, aspartate 477 to leucine 479, and aspartate 493.

The protein belongs to the chaperonin (HSP60) family. In terms of assembly, forms a cylinder of 14 subunits composed of two heptameric rings stacked back-to-back. Interacts with the co-chaperonin GroES.

It localises to the cytoplasm. The catalysed reaction is ATP + H2O + a folded polypeptide = ADP + phosphate + an unfolded polypeptide.. In terms of biological role, together with its co-chaperonin GroES, plays an essential role in assisting protein folding. The GroEL-GroES system forms a nano-cage that allows encapsulation of the non-native substrate proteins and provides a physical environment optimized to promote and accelerate protein folding. The protein is Chaperonin GroEL of Clostridium botulinum (strain Loch Maree / Type A3).